Reading from the N-terminus, the 258-residue chain is HLA class II histocompatibility antigen, DP beta 1 chain (258 aa).

The N-terminal stretch at 1-29 is a signal peptide; sequence MMVLQVSAAPRTVALTALLMVLLTSVVQG. The segment at 30–121 is beta-1; it reads RATPENYLFQ…LGGPMTLQRR (92 aa). At 30 to 225 the chain is on the extracellular side; sequence RATPENYLFQ…KAQSDSARSK (196 aa). Cystine bridges form between C44–C106 and C144–C200. N48 carries N-linked (GlcNAc...) asparagine glycosylation. Residues 122–215 are beta-2; the sequence is VQPRVNVSPS…SLDSPVTVEW (94 aa). The Ig-like C1-type domain occupies 124-212; it reads PRVNVSPSKK…EHTSLDSPVT (89 aa). The segment at 216–225 is connecting peptide; it reads KAQSDSARSK. A helical membrane pass occupies residues 226–246; sequence TLTGAGGFVLGLIICGVGIFM. The Cytoplasmic segment spans residues 247–258; sequence HRRSKKVQRGSA.

Belongs to the MHC class II family. In terms of assembly, heterodimer of an alpha and a beta subunit; also referred as MHC class II molecule. In the endoplasmic reticulum (ER) it forms a heterononamer; 3 MHC class II molecules bind to a CD74 homotrimer (also known as invariant chain or HLA class II histocompatibility antigen gamma chain). In the endosomal/lysosomal system; CD74 undergoes sequential degradation by various proteases; leaving a small fragment termed CLIP on each MHC class II molecule. MHC class II molecule interacts with HLA_DM, and HLA_DO in B-cells, in order to release CLIP and facilitate the binding of antigenic peptides.

It localises to the cell membrane. The protein resides in the endoplasmic reticulum membrane. Its subcellular location is the golgi apparatus. The protein localises to the trans-Golgi network membrane. It is found in the endosome membrane. It localises to the lysosome membrane. Binds peptides derived from antigens that access the endocytic route of antigen presenting cells (APC) and presents them on the cell surface for recognition by the CD4 T-cells. The peptide binding cleft accommodates peptides of 10-30 residues. The peptides presented by MHC class II molecules are generated mostly by degradation of proteins that access the endocytic route, where they are processed by lysosomal proteases and other hydrolases. Exogenous antigens that have been endocytosed by the APC are thus readily available for presentation via MHC II molecules, and for this reason this antigen presentation pathway is usually referred to as exogenous. As membrane proteins on their way to degradation in lysosomes as part of their normal turn-over are also contained in the endosomal/lysosomal compartments, exogenous antigens must compete with those derived from endogenous components. Autophagy is also a source of endogenous peptides, autophagosomes constitutively fuse with MHC class II loading compartments. In addition to APCs, other cells of the gastrointestinal tract, such as epithelial cells, express MHC class II molecules and CD74 and act as APCs, which is an unusual trait of the GI tract. To produce a MHC class II molecule that presents an antigen, three MHC class II molecules (heterodimers of an alpha and a beta chain) associate with a CD74 trimer in the ER to form a heterononamer. Soon after the entry of this complex into the endosomal/lysosomal system where antigen processing occurs, CD74 undergoes a sequential degradation by various proteases, including CTSS and CTSL, leaving a small fragment termed CLIP (class-II-associated invariant chain peptide). The removal of CLIP is facilitated by HLA-DM via direct binding to the alpha-beta-CLIP complex so that CLIP is released. HLA-DM stabilizes MHC class II molecules until primary high affinity antigenic peptides are bound. The MHC II molecule bound to a peptide is then transported to the cell membrane surface. In B-cells, the interaction between HLA-DM and MHC class II molecules is regulated by HLA-DO. Primary dendritic cells (DCs) also to express HLA-DO. Lysosomal microenvironment has been implicated in the regulation of antigen loading into MHC II molecules, increased acidification produces increased proteolysis and efficient peptide loading. This is HLA class II histocompatibility antigen, DP beta 1 chain (HLA-DPB1) from Homo sapiens (Human).